A 62-amino-acid chain; its full sequence is MKANELKNATAAELEAKGTELTKELFNVKFQLHTGRLENTSKVSNLRKDIARVKTILREKRG.

The protein belongs to the universal ribosomal protein uL29 family.

In Geobacter sp. (strain M21), this protein is Large ribosomal subunit protein uL29.